Reading from the N-terminus, the 616-residue chain is Zinc metalloproteinase-disintegrin-like ecarin (616 aa).

An N-terminal signal peptide occupies residues 1–20 (MIQILLVIICLAVFPYQGCS). Residues 21–190 (IILGSGNVND…EPIKKTLGLI (170 aa)) constitute a propeptide that is removed on maturation. Positions 201–397 (KFIELVVVVD…YNPKCILDPP (197 aa)) constitute a Peptidase M12B domain. A Ca(2+)-binding site is contributed by Glu-204. Asn-219 and Asn-261 each carry an N-linked (GlcNAc...) asparagine glycan. Asp-288 is a binding site for Ca(2+). N-linked (GlcNAc...) asparagine glycosylation is found at Asn-295 and Asn-326. 3 disulfide bridges follow: Cys-312-Cys-392, Cys-352-Cys-376, and Cys-354-Cys-359. His-337 is a Zn(2+) binding site. Residue Glu-338 is part of the active site. His-341 and His-347 together coordinate Zn(2+). Ca(2+) contacts are provided by Cys-392, Val-407, Asn-410, Ile-412, Glu-414, Glu-417, and Asp-420. In terms of domain architecture, Disintegrin spans 405–491 (PAVCGNEIWE…ECPRNEFQRN (87 aa)). Cystine bridges form between Cys-408–Cys-437, Cys-419–Cys-432, Cys-421–Cys-427, Cys-431–Cys-454, Cys-445–Cys-451, Cys-450–Cys-476, Cys-463–Cys-483, Cys-470–Cys-502, Cys-495–Cys-507, Cys-514–Cys-567, Cys-529–Cys-578, Cys-542–Cys-555, Cys-562–Cys-604, and Cys-598–Cys-609. Positions 469–471 (DCD) match the D/ECD-tripeptide motif. Ca(2+) is bound by residues Asp-471, Val-472, and Asn-486. A glycan (N-linked (GlcNAc...) asparagine) is linked at Asn-497.

It belongs to the venom metalloproteinase (M12B) family. P-III subfamily. P-IIIa sub-subfamily. As to quaternary structure, monomer. Requires Zn(2+) as cofactor. In terms of tissue distribution, expressed by the venom gland.

Its subcellular location is the secreted. In terms of biological role, snake venom zinc metalloproteinase that catalyzes the conversion of prothrombin (F2) to alpha-thrombin through formation of a thrombin intermediate, thereby functioning as a procoagulant protein. Has a low Km for prothrombin and a high kcat. Cleaves the 320-Arg-Ile-321 bond in prothrombin and produces meizothrombin which is ultimately converted to alpha-thrombin by autolysis. The chain is Zinc metalloproteinase-disintegrin-like ecarin from Echis carinatus (Saw-scaled viper).